The chain runs to 63 residues: Lantibiotic mutacin-1140 (63 aa).

Positions 1 to 41 (MSNTQLLEVLGTETFDVQEDLFAFDTTDTTIVASNDDPDTR) are excised as a propeptide. Positions 44-48 (SWSLC) form a cross-link, lanthionine (Ser-Cys). At serine 46 the chain carries 2,3-didehydroalanine (Ser). The segment at residues 49 to 52 (TPGC) is a cross-link (beta-methyllanthionine (Thr-Cys)). Residue threonine 55 is modified to 2,3-didehydrobutyrine. Positions 57–62 (SFNSYC) form a cross-link, lanthionine (Ser-Cys). Residues 60–63 (SYCC) constitute a cross-link (S-(2-aminovinyl)-D-cysteine (Ser-Cys)).

This sequence belongs to the type A lantibiotic family. In terms of processing, maturation of lantibiotics involves the enzymatic conversion of Thr, and Ser into dehydrated AA and the formation of thioether bonds with cysteine. The C-terminal lanthionine undergoes decarboxylation. This is followed by membrane translocation and cleavage of the modified precursor. The structure of the 2,3-didehydrobutyrine is not discussed in PubMed:11082191.

Its function is as follows. Lanthionine-containing peptide antibiotic (lantibiotic) active on Gram-positive bacteria. The bactericidal activity of lantibiotics is based on depolarization of energized bacterial cytoplasmic membranes, initiated by the formation of aqueous transmembrane pores. The polypeptide is Lantibiotic mutacin-1140 (lanA) (Streptococcus mutans).